The chain runs to 360 residues: G-protein coupled receptor 15 (360 aa).

Residues 1–33 (MDPEETSVYLDYYYATSPNSDIRETHSHVPYTS) are Extracellular-facing. A helical membrane pass occupies residues 34–54 (VFLPVFYTAVFLTGVLGNLVL). The Cytoplasmic segment spans residues 55–69 (MGALHFKPGSRRLID). Residues 70-90 (IFIINLAASDFIFLVTLPLWV) traverse the membrane as a helical segment. Topologically, residues 91–120 (DKEASLGLWRTGSFLCKGSSYMISVNMHCS) are extracellular. The helical transmembrane segment at 121-141 (VLLLTCMSVDRYLAIVWPVVS) threads the bilayer. Residues 142 to 149 (RKFRRTDC) are Cytoplasmic-facing. The helical transmembrane segment at 150-170 (AYVVCASIWFISCLLGLPTLL) threads the bilayer. Residues 171–192 (SRELTLIDDKPYCAEKKATPIK) lie on the Extracellular side of the membrane. Residues 193-213 (LIWSLVALIFTFFVPLLSIVT) form a helical membrane-spanning segment. The Cytoplasmic portion of the chain corresponds to 214 to 239 (CYCCIARKLCAHYQQSGKHNKKLKKS). The helical transmembrane segment at 240–260 (IKIIFIVVAAFLVSWLPFNTF) threads the bilayer. The Extracellular portion of the chain corresponds to 261–284 (KFLAIVSGLRQEHYLPSAILQLGM). Residues 285–305 (EVSGPLAFANSCVNPFIYYIF) form a helical membrane-spanning segment. Over 306–360 (DSYIRRAIVHCLCPCLKNYDFGSSTETSDSHLTKALSTFIHAEDFARRRKRSVSL) the chain is Cytoplasmic. Serine 359 carries the post-translational modification Phosphoserine.

It belongs to the G-protein coupled receptor 1 family. As to quaternary structure, interacts with adapter YWHAE; this interaction promotes ER-to-Golgi transport of GPR15. Interacts with GNAI1; this interaction initiates the signaling pathway. Post-translationally, phosphorylation is necessary for YWHAE binding and efficient surface expression. O-glycosylated. Sialylated O-glycans in the N-terminal tail inhibits binding of GPR15LG. In terms of processing, sulfation is required for efficient binding of GPR15LG. In terms of tissue distribution, highly expressed in lymphoid tissues, including macrophages and peripheral blood mononuclear cells.

It localises to the cell membrane. In terms of biological role, g protein-coupled receptor that plays an important role in immune homeostasis. Acts via its natural ligand GPR15LG, a chemokine-like polypeptide strongly expressed in gastrointestinal tissues. GPR15-GPR15LG signaling axis regulates intestinal homeostasis and inflammation through the migration of immune cells. Controls thereby the specific homing of T-cells, particularly FOXP3+ regulatory T-cells (Tregs), to the large intestine lamina propria. Also required for skin localization of thymus-derived dendritic epidermal T-cells. Plays an important role in mediating cytoprotective function as well as angiogenesis of thrombomodulin. Mechanistically, preferentially signals through the Gi/o pathway to inhibit adenylate cyclase activity and activate a phosphatidylinositol-calcium second messenger system that regulates the release of Ca(2+) ions from intracellular stores. Its function is as follows. (Microbial infection) Acts as an alternative coreceptor with CD4 for HIV-1 infection. This is G-protein coupled receptor 15 (GPR15) from Homo sapiens (Human).